We begin with the raw amino-acid sequence, 314 residues long: Mycothiol acetyltransferase (314 aa).

N-acetyltransferase domains are found at residues 18–156 (ATIR…RPLA) and 168–314 (IRIA…MYQL). Glutamate 38 provides a ligand contact to 1D-myo-inositol 2-(L-cysteinylamino)-2-deoxy-alpha-D-glucopyranoside. An acetyl-CoA-binding site is contributed by 92–94 (VVV). 3 residues coordinate 1D-myo-inositol 2-(L-cysteinylamino)-2-deoxy-alpha-D-glucopyranoside: glutamate 195, lysine 234, and glutamate 248. Acetyl-CoA is bound by residues 252-254 (VGL) and 259-265 (QGHGLGR). Tyrosine 286 provides a ligand contact to 1D-myo-inositol 2-(L-cysteinylamino)-2-deoxy-alpha-D-glucopyranoside.

It belongs to the acetyltransferase family. MshD subfamily. In terms of assembly, monomer.

The enzyme catalyses 1D-myo-inositol 2-(L-cysteinylamino)-2-deoxy-alpha-D-glucopyranoside + acetyl-CoA = mycothiol + CoA + H(+). Its function is as follows. Catalyzes the transfer of acetyl from acetyl-CoA to desacetylmycothiol (Cys-GlcN-Ins) to form mycothiol. This Catenulispora acidiphila (strain DSM 44928 / JCM 14897 / NBRC 102108 / NRRL B-24433 / ID139908) protein is Mycothiol acetyltransferase.